A 102-amino-acid polypeptide reads, in one-letter code: MQNKSKVRDDFIKIVKDVKKDFPELDLKIRVNKEKVTFLNSPLELYHKSVSLILGLLQQIENSLGLFPDSPVLEKLEDNSLKLKKALIMLILSRKDMFSKAE.

In Chlamydia trachomatis serovar L2 (strain ATCC VR-902B / DSM 19102 / 434/Bu), this protein is Virulence plasmid protein pGP4-D.